We begin with the raw amino-acid sequence, 158 residues long: NAD(P)H-quinone oxidoreductase subunit J, chloroplastic (158 aa).

The protein belongs to the complex I 30 kDa subunit family. In terms of assembly, NDH is composed of at least 16 different subunits, 5 of which are encoded in the nucleus.

The protein resides in the plastid. It is found in the chloroplast thylakoid membrane. The catalysed reaction is a plastoquinone + NADH + (n+1) H(+)(in) = a plastoquinol + NAD(+) + n H(+)(out). It catalyses the reaction a plastoquinone + NADPH + (n+1) H(+)(in) = a plastoquinol + NADP(+) + n H(+)(out). In terms of biological role, NDH shuttles electrons from NAD(P)H:plastoquinone, via FMN and iron-sulfur (Fe-S) centers, to quinones in the photosynthetic chain and possibly in a chloroplast respiratory chain. The immediate electron acceptor for the enzyme in this species is believed to be plastoquinone. Couples the redox reaction to proton translocation, and thus conserves the redox energy in a proton gradient. The sequence is that of NAD(P)H-quinone oxidoreductase subunit J, chloroplastic from Aethionema cordifolium (Lebanon stonecress).